The chain runs to 234 residues: 7-cyano-7-deazaguanine synthase (234 aa).

An ATP-binding site is contributed by 7–17 (LSGGLDSAVCM). Cys197, Cys208, Cys211, and Cys214 together coordinate Zn(2+).

This sequence belongs to the QueC family. Requires Zn(2+) as cofactor.

It carries out the reaction 7-carboxy-7-deazaguanine + NH4(+) + ATP = 7-cyano-7-deazaguanine + ADP + phosphate + H2O + H(+). It functions in the pathway purine metabolism; 7-cyano-7-deazaguanine biosynthesis. Functionally, catalyzes the ATP-dependent conversion of 7-carboxy-7-deazaguanine (CDG) to 7-cyano-7-deazaguanine (preQ(0)). The chain is 7-cyano-7-deazaguanine synthase from Methanococcus aeolicus (strain ATCC BAA-1280 / DSM 17508 / OCM 812 / Nankai-3).